A 345-amino-acid chain; its full sequence is L-Ala-D/L-Glu epimerase (345 aa).

Residues T134 and K159 each coordinate substrate. K161 (proton acceptor; specific for (R)-substrate epimerization) is an active-site residue. Residue D188 participates in Mg(2+) binding. N190 lines the substrate pocket. The Mg(2+) site is built by E216 and D241. K265 (proton acceptor; specific for (S)-substrate epimerization) is an active-site residue. Residues C292, D317, and D319 each coordinate substrate.

This sequence belongs to the mandelate racemase/muconate lactonizing enzyme family. Requires Mg(2+) as cofactor.

The catalysed reaction is L-alanyl-L-glutamate = L-alanyl-D-glutamate. Its pathway is cell wall degradation; peptidoglycan degradation. Functionally, catalyzes the epimerization of L-Ala-D-Glu to L-Ala-L-Glu and has probably a role in the metabolism of the murein peptide, of which L-Ala-D-Glu is a component. Is also able to catalyze the reverse reaction and the epimerization of a broad range of other dipeptides; is most efficient with L-Ala-D/L-Phe, L-Ala-D/L-Tyr, and L-Ala-D/L-His. This chain is L-Ala-D/L-Glu epimerase, found in Thermotoga maritima (strain ATCC 43589 / DSM 3109 / JCM 10099 / NBRC 100826 / MSB8).